A 282-amino-acid chain; its full sequence is ATP synthase gamma chain (282 aa).

This sequence belongs to the ATPase gamma chain family. F-type ATPases have 2 components, CF(1) - the catalytic core - and CF(0) - the membrane proton channel. CF(1) has five subunits: alpha(3), beta(3), gamma(1), delta(1), epsilon(1). CF(0) has three main subunits: a, b and c.

It is found in the cell membrane. Functionally, produces ATP from ADP in the presence of a proton gradient across the membrane. The gamma chain is believed to be important in regulating ATPase activity and the flow of protons through the CF(0) complex. The chain is ATP synthase gamma chain from Clostridium botulinum (strain Okra / Type B1).